We begin with the raw amino-acid sequence, 733 residues long: Photosystem I P700 chlorophyll a apoprotein A2 (733 aa).

Transmembrane regions (helical) follow at residues 46 to 69, 135 to 158, 175 to 199, 273 to 291, 330 to 353, 369 to 395, 417 to 439, and 516 to 534; these read IFAS…FHVA, LYNG…LHLQ, LNHH…HVAI, MAHH…GHQY, LHFQ…QHMY, AALY…IFFI, AIIS…LYVH, and FLVH…LILV. Residues Cys-558 and Cys-567 each coordinate [4Fe-4S] cluster. The next 2 helical transmembrane spans lie at 574–595 and 642–664; these read AFYL…YFHW and LSVW…MFLI. Chlorophyll a is bound by residues His-653, Met-661, and Tyr-669. A phylloquinone-binding site is contributed by Trp-670. A helical transmembrane segment spans residues 706–726; it reads LVGLTHFAVGFVLTYAAFVIA.

Belongs to the PsaA/PsaB family. The PsaA/B heterodimer binds the P700 chlorophyll special pair and subsequent electron acceptors. PSI consists of a core antenna complex that captures photons, and an electron transfer chain that converts photonic excitation into a charge separation. The eukaryotic PSI reaction center is composed of at least 11 subunits. It depends on P700 is a chlorophyll a/chlorophyll a' dimer, A0 is one or more chlorophyll a, A1 is one or both phylloquinones and FX is a shared 4Fe-4S iron-sulfur center. as a cofactor.

Its subcellular location is the plastid. It is found in the chloroplast thylakoid membrane. The catalysed reaction is reduced [plastocyanin] + hnu + oxidized [2Fe-2S]-[ferredoxin] = oxidized [plastocyanin] + reduced [2Fe-2S]-[ferredoxin]. Functionally, psaA and PsaB bind P700, the primary electron donor of photosystem I (PSI), as well as the electron acceptors A0, A1 and FX. PSI is a plastocyanin/cytochrome c6-ferredoxin oxidoreductase, converting photonic excitation into a charge separation, which transfers an electron from the donor P700 chlorophyll pair to the spectroscopically characterized acceptors A0, A1, FX, FA and FB in turn. Oxidized P700 is reduced on the lumenal side of the thylakoid membrane by plastocyanin or cytochrome c6. In Ostreococcus tauri, this protein is Photosystem I P700 chlorophyll a apoprotein A2.